The sequence spans 542 residues: ABC transport system permease protein p69 (542 aa).

A run of 12 helical transmembrane segments spans residues A23–F43, I77–L97, F114–F134, A140–F160, L212–V232, L236–F256, V287–L307, T350–A370, L386–F406, I412–F432, L481–E501, and G509–V529. An ABC transmembrane type-1 domain is found at T349–L526.

The protein belongs to the binding-protein-dependent transport system permease family.

It localises to the cell membrane. Probably part of a high-affinity transport system. The sequence is that of ABC transport system permease protein p69 (p69) from Mycoplasma pneumoniae (strain ATCC 29342 / M129 / Subtype 1) (Mycoplasmoides pneumoniae).